The following is a 299-amino-acid chain: Ficolin-3 (299 aa).

Positions 1–23 (MDLLWILPSLWLLLLGGPACLKT) are cleaved as a signal peptide. The tract at residues 44–81 (PSCPGAPGSPGEKGAPGPQGPPGPPGKMGPKGEPGDPV) is disordered. In terms of domain architecture, Collagen-like spans 48–80 (GAPGSPGEKGAPGPQGPPGPPGKMGPKGEPGDP). Hydroxyproline occurs at positions 50, 53, 59, 65, 68, and 77. Residues 61–70 (PQGPPGPPGK) are compositionally biased toward pro residues. The 216-residue stretch at 84-299 (LRCQEGPRNC…PYRRVRMMLR (216 aa)) folds into the Fibrinogen C-terminal domain. 2 cysteine pairs are disulfide-bonded: C86–C110 and C93–C121. N189 is a glycosylation site (N-linked (GlcNAc...) (complex) asparagine). The Ca(2+) site is built by D237, D239, S241, and S243. C245 and C258 form a disulfide bridge. 258–259 (CY) contacts a carbohydrate.

This sequence belongs to the ficolin lectin family. In terms of assembly, homotrimer. May form an octadecamer consisting of an elementary trimer unit. Does not interact with fibronectin, elastin or zymosan. Interacts with MASP1 and MASP2. The N-terminus is blocked. In terms of tissue distribution, liver and lung. In liver it is produced by bile duct epithelial cells and hepatocytes. In lung it is produced by both ciliated bronchial epithelial cells and type II alveolar epithelial cells.

The protein resides in the secreted. Functionally, may function in innate immunity through activation of the lectin complement pathway. Calcium-dependent and GlcNAc-binding lectin. Has affinity with GalNAc, GlcNAc, D-fucose, as mono/oligosaccharide and lipopolysaccharides from S.typhimurium and S.minnesota. The polypeptide is Ficolin-3 (FCN3) (Homo sapiens (Human)).